Consider the following 403-residue polypeptide: Putative transport protein TP_0553 (403 aa).

The next 8 helical transmembrane spans lie at isoleucine 10–tyrosine 30, leucine 31–leucine 51, alanine 92–isoleucine 112, leucine 202–leucine 222, lysine 243–phenylalanine 263, leucine 271–leucine 291, valine 293–alanine 313, and threonine 350–isoleucine 370.

This sequence belongs to the autoinducer-2 exporter (AI-2E) (TC 2.A.86) family.

It localises to the cell membrane. The sequence is that of Putative transport protein TP_0553 from Treponema pallidum (strain Nichols).